Reading from the N-terminus, the 357-residue chain is UDP-N-acetylglucosamine--N-acetylmuramyl-(pentapeptide) pyrophosphoryl-undecaprenol N-acetylglucosamine transferase (357 aa).

UDP-N-acetyl-alpha-D-glucosamine-binding positions include 13–15 (TGG), asparagine 125, arginine 161, serine 189, isoleucine 243, and glutamine 288.

The protein belongs to the glycosyltransferase 28 family. MurG subfamily.

The protein localises to the cell inner membrane. The enzyme catalyses di-trans,octa-cis-undecaprenyl diphospho-N-acetyl-alpha-D-muramoyl-L-alanyl-D-glutamyl-meso-2,6-diaminopimeloyl-D-alanyl-D-alanine + UDP-N-acetyl-alpha-D-glucosamine = di-trans,octa-cis-undecaprenyl diphospho-[N-acetyl-alpha-D-glucosaminyl-(1-&gt;4)]-N-acetyl-alpha-D-muramoyl-L-alanyl-D-glutamyl-meso-2,6-diaminopimeloyl-D-alanyl-D-alanine + UDP + H(+). Its pathway is cell wall biogenesis; peptidoglycan biosynthesis. Its function is as follows. Cell wall formation. Catalyzes the transfer of a GlcNAc subunit on undecaprenyl-pyrophosphoryl-MurNAc-pentapeptide (lipid intermediate I) to form undecaprenyl-pyrophosphoryl-MurNAc-(pentapeptide)GlcNAc (lipid intermediate II). This Bordetella parapertussis (strain 12822 / ATCC BAA-587 / NCTC 13253) protein is UDP-N-acetylglucosamine--N-acetylmuramyl-(pentapeptide) pyrophosphoryl-undecaprenol N-acetylglucosamine transferase.